The chain runs to 924 residues: Periplasmic nitrate reductase (924 aa).

The segment at residues 1-30 is a signal peptide (tat-type signal); the sequence is MNRRDFIKNTAIASAASVAGLSVPSSMLGA. In terms of domain architecture, 4Fe-4S Mo/W bis-MGD-type spans 35 to 91; it reads WKWDKAVCRFCGTGCGIMIARKDGKIVATKGDPAAPVNRGLNCIKGYFNAKIMYGED. The [4Fe-4S] cluster site is built by cysteine 42, cysteine 45, cysteine 49, and cysteine 77. Residues lysine 79, glutamine 147, asparagine 172, cysteine 176, 209–216, methionine 417, glutamine 421, asparagine 527, 552–553, lysine 575, aspartate 602, and 814–823 each bind Mo-bis(molybdopterin guanine dinucleotide); these read WGANMAEM, SD, and TGRVLEHWHS. Tryptophan 890 lines the substrate pocket. Residues asparagine 898 and lysine 915 each coordinate Mo-bis(molybdopterin guanine dinucleotide).

This sequence belongs to the prokaryotic molybdopterin-containing oxidoreductase family. NasA/NapA/NarB subfamily. In terms of assembly, component of the periplasmic nitrate reductase NapAB complex composed of NapA and NapB. [4Fe-4S] cluster serves as cofactor. Requires Mo-bis(molybdopterin guanine dinucleotide) as cofactor. Post-translationally, predicted to be exported by the Tat system. The position of the signal peptide cleavage has not been experimentally proven.

The protein resides in the periplasm. The enzyme catalyses 2 Fe(II)-[cytochrome] + nitrate + 2 H(+) = 2 Fe(III)-[cytochrome] + nitrite + H2O. Catalytic subunit of the periplasmic nitrate reductase complex NapAB. Receives electrons from NapB and catalyzes the reduction of nitrate to nitrite. The polypeptide is Periplasmic nitrate reductase (Campylobacter jejuni subsp. jejuni serotype O:2 (strain ATCC 700819 / NCTC 11168)).